The primary structure comprises 597 residues: Proline--tRNA ligase (597 aa).

It belongs to the class-II aminoacyl-tRNA synthetase family. ProS type 1 subfamily. Homodimer.

The protein localises to the cytoplasm. It carries out the reaction tRNA(Pro) + L-proline + ATP = L-prolyl-tRNA(Pro) + AMP + diphosphate. Functionally, catalyzes the attachment of proline to tRNA(Pro) in a two-step reaction: proline is first activated by ATP to form Pro-AMP and then transferred to the acceptor end of tRNA(Pro). As ProRS can inadvertently accommodate and process non-cognate amino acids such as alanine and cysteine, to avoid such errors it has two additional distinct editing activities against alanine. One activity is designated as 'pretransfer' editing and involves the tRNA(Pro)-independent hydrolysis of activated Ala-AMP. The other activity is designated 'posttransfer' editing and involves deacylation of mischarged Ala-tRNA(Pro). The misacylated Cys-tRNA(Pro) is not edited by ProRS. In Bifidobacterium longum (strain NCC 2705), this protein is Proline--tRNA ligase.